Consider the following 168-residue polypeptide: Nascent polypeptide-associated complex subunit alpha (168 aa).

Residues 14 to 78 (SKNEKKAREL…PKVDDFTRRL (65 aa)) enclose the NAC-A/B domain. Residues 83 to 129 (QQAASAAKDPQSIQADMAAAAAAPAAPAAPAAAPEEDEAGQVDESGL) are disordered. Residues 100–115 (AAAAAAPAAPAAPAAA) are compositionally biased toward low complexity. One can recognise a UBA domain in the interval 129 to 168 (LDGQDIELVMQQANVSRNKAVKALREHNSDIVNAIMSLSK).

Belongs to the NAC-alpha family. As to quaternary structure, part of the nascent polypeptide-associated complex (NAC), consisting of EGD2 and EGD1. NAC associates with ribosomes via EGD1.

The protein resides in the cytoplasm. It localises to the nucleus. In terms of biological role, component of the nascent polypeptide-associated complex (NAC), a dynamic component of the ribosomal exit tunnel, protecting the emerging polypeptides from interaction with other cytoplasmic proteins to ensure appropriate nascent protein targeting. The NAC complex also promotes mitochondrial protein import by enhancing productive ribosome interactions with the outer mitochondrial membrane and blocks the inappropriate interaction of ribosomes translating non-secretory nascent polypeptides with translocation sites in the membrane of the endoplasmic reticulum. EGD2 may also be involved in transcription regulation. This chain is Nascent polypeptide-associated complex subunit alpha (EGD2), found in Eremothecium gossypii (strain ATCC 10895 / CBS 109.51 / FGSC 9923 / NRRL Y-1056) (Yeast).